A 382-amino-acid chain; its full sequence is DNA replication and repair protein RecF (382 aa).

30–37 (GPNGHGKS) contributes to the ATP binding site.

It belongs to the RecF family.

It is found in the cytoplasm. In terms of biological role, the RecF protein is involved in DNA metabolism; it is required for DNA replication and normal SOS inducibility. RecF binds preferentially to single-stranded, linear DNA. It also seems to bind ATP. This chain is DNA replication and repair protein RecF, found in Magnetococcus marinus (strain ATCC BAA-1437 / JCM 17883 / MC-1).